Reading from the N-terminus, the 427-residue chain is 4-hydroxy-3-methylbut-2-en-1-yl diphosphate synthase (flavodoxin) (427 aa).

4 residues coordinate [4Fe-4S] cluster: Cys-300, Cys-303, Cys-346, and Glu-353.

The protein belongs to the IspG family. [4Fe-4S] cluster is required as a cofactor.

It carries out the reaction (2E)-4-hydroxy-3-methylbut-2-enyl diphosphate + oxidized [flavodoxin] + H2O + 2 H(+) = 2-C-methyl-D-erythritol 2,4-cyclic diphosphate + reduced [flavodoxin]. It functions in the pathway isoprenoid biosynthesis; isopentenyl diphosphate biosynthesis via DXP pathway; isopentenyl diphosphate from 1-deoxy-D-xylulose 5-phosphate: step 5/6. Functionally, converts 2C-methyl-D-erythritol 2,4-cyclodiphosphate (ME-2,4cPP) into 1-hydroxy-2-methyl-2-(E)-butenyl 4-diphosphate. In Chromobacterium violaceum (strain ATCC 12472 / DSM 30191 / JCM 1249 / CCUG 213 / NBRC 12614 / NCIMB 9131 / NCTC 9757 / MK), this protein is 4-hydroxy-3-methylbut-2-en-1-yl diphosphate synthase (flavodoxin).